Here is a 308-residue protein sequence, read N- to C-terminus: Glutaminase (308 aa).

Substrate contacts are provided by Ser-66, Asn-117, Glu-161, Asn-168, Tyr-192, Tyr-244, and Val-262.

This sequence belongs to the glutaminase family. As to quaternary structure, homotetramer.

It carries out the reaction L-glutamine + H2O = L-glutamate + NH4(+). This chain is Glutaminase, found in Proteus mirabilis (strain HI4320).